A 291-amino-acid polypeptide reads, in one-letter code: Protein CMSS1 (291 aa).

Residues 1 to 96 form a disordered region; sequence MADDLGDEWW…KKTITDVLTS (96 aa). The span at 17-27 shows a compositional bias: acidic residues; sequence DVPEVEEETEH. Positions 58–79 are enriched in basic and acidic residues; sequence VKKECFITQERSEEKPDNESNK.

This sequence belongs to the CMS1 family.

This chain is Protein CMSS1 (cmss1), found in Danio rerio (Zebrafish).